A 272-amino-acid chain; its full sequence is Dermonecrotic toxin StSicTox-betaIC1 (272 aa).

His-5 is an active-site residue. Mg(2+) contacts are provided by Glu-25 and Asp-27. Catalysis depends on His-41, which acts as the Nucleophile. 2 disulfides stabilise this stretch: Cys-45/Cys-51 and Cys-47/Cys-191. Residue Asp-85 participates in Mg(2+) binding.

This sequence belongs to the arthropod phospholipase D family. Class II subfamily. Class IIb sub-subfamily. It depends on Mg(2+) as a cofactor. Expressed by the venom gland.

Its subcellular location is the secreted. It carries out the reaction an N-(acyl)-sphingosylphosphocholine = an N-(acyl)-sphingosyl-1,3-cyclic phosphate + choline. It catalyses the reaction N-hexanoyl-sphing-4-enine-1-phosphocholine = N-(hexanoyl)-sphing-4-enine-1,3-cyclic phosphate + choline. The catalysed reaction is an N-(acyl)-sphingosylphosphoethanolamine = an N-(acyl)-sphingosyl-1,3-cyclic phosphate + ethanolamine. The enzyme catalyses N-dodecanoyl-heptadecasphing-4-enine-1-phosphoethanolamine = N-dodecanoyl-heptadecasphing-4-enine-1,3-cyclic phosphate + ethanolamine. It carries out the reaction a 1-acyl-sn-glycero-3-phosphoethanolamine = a 1-acyl-sn-glycero-2,3-cyclic phosphate + ethanolamine. It catalyses the reaction 1-tetradecanoyl-sn-glycero-3-phosphoethanolamine = 1-tetradecanoyl-sn-glycero-2,3-cyclic phosphate + ethanolamine. Its function is as follows. Dermonecrotic toxins cleave the phosphodiester linkage between the phosphate and headgroup of certain phospholipids (sphingolipid and lysolipid substrates), forming an alcohol (often choline) and a cyclic phosphate. This toxin acts on lysophosphatidylethanolamine (LPE) and ceramide phosphoethanolamine (CPE) with high activity. This toxin acts on sphingomyelin (SM) with very low activity and is not active on lysophosphatidylserine (LPS), lysophosphatidylcholine (LPC) and lysophosphatidylglycerol (LPG). It acts by transphosphatidylation, releasing exclusively cyclic phosphate as second products. It is not surprising that spider toxins have affinity for ethanolamine-containing sphingolipids since they are common in insect prey. Induces dermonecrosis, hemolysis, increased vascular permeability, edema, inflammatory response, and platelet aggregation. This is Dermonecrotic toxin StSicTox-betaIC1 from Sicarius terrosus (Cave spider).